The chain runs to 341 residues: Guanine nucleotide-binding protein subunit beta (341 aa).

7 WD repeats span residues 54–84 (GHLA…IVWD), 96–126 (LRSS…SIYS), 142–171 (GHTG…ALWN), 183–213 (GHTG…KLFD), 225–255 (GHES…RLFD), 269–299 (NIIC…NVWD), and 311–341 (GHDN…KIWN).

Belongs to the WD repeat G protein beta family. G proteins are composed of 3 units, alpha, beta and gamma.

In terms of biological role, guanine nucleotide-binding proteins (G proteins) are involved as a modulator or transducer in various transmembrane signaling systems. The beta and gamma chains are required for the GTPase activity, for replacement of GDP by GTP, and for G protein-effector interaction. This Loligo forbesii (Veined squid) protein is Guanine nucleotide-binding protein subunit beta.